The following is a 120-amino-acid chain: uncharacterized protein (120 aa).

Positions 45–78 (QLISESLKIAQKDLMEVRKELRKRKIAIRETERD) form a coiled coil.

This is an uncharacterized protein from Bacillus subtilis (strain 168).